We begin with the raw amino-acid sequence, 318 residues long: Lipoyl synthase (318 aa).

7 residues coordinate [4Fe-4S] cluster: Cys64, Cys69, Cys75, Cys90, Cys94, Cys97, and Ser304. Positions Phe76–Lys293 constitute a Radical SAM core domain.

The protein belongs to the radical SAM superfamily. Lipoyl synthase family. [4Fe-4S] cluster is required as a cofactor.

The protein resides in the cytoplasm. The enzyme catalyses [[Fe-S] cluster scaffold protein carrying a second [4Fe-4S](2+) cluster] + N(6)-octanoyl-L-lysyl-[protein] + 2 oxidized [2Fe-2S]-[ferredoxin] + 2 S-adenosyl-L-methionine + 4 H(+) = [[Fe-S] cluster scaffold protein] + N(6)-[(R)-dihydrolipoyl]-L-lysyl-[protein] + 4 Fe(3+) + 2 hydrogen sulfide + 2 5'-deoxyadenosine + 2 L-methionine + 2 reduced [2Fe-2S]-[ferredoxin]. The protein operates within protein modification; protein lipoylation via endogenous pathway; protein N(6)-(lipoyl)lysine from octanoyl-[acyl-carrier-protein]: step 2/2. In terms of biological role, catalyzes the radical-mediated insertion of two sulfur atoms into the C-6 and C-8 positions of the octanoyl moiety bound to the lipoyl domains of lipoate-dependent enzymes, thereby converting the octanoylated domains into lipoylated derivatives. The chain is Lipoyl synthase from Pseudomonas syringae pv. tomato (strain ATCC BAA-871 / DC3000).